Consider the following 453-residue polypeptide: Serine/threonine-protein phosphatase 2A regulatory subunit B'' subunit gamma (453 aa).

2 EF-hand domains span residues 273-308 and 341-376; these read PSAL…TMTN and KEPA…IQEL. 5 residues coordinate Ca(2+): Asp-286, Asp-288, Asn-290, Met-292, and Glu-297.

As to quaternary structure, interacts with MCM3AP/GANP. Interacts with PPP5C, and the phosphatase 2A core enzyme composed of the PPP2CA catalytic subunit and the constant regulatory subunit PPP2R1A. Finds in a complex with ABCB1, TFPI2 and PPP2R3C; leading to the dephosphorylation of ABCB1. In terms of tissue distribution, ubiquitously expressed in brain and other tissues.

The protein resides in the nucleus. It localises to the cytoplasm. Its function is as follows. May regulate MCM3AP phosphorylation through phosphatase recruitment. May act as a negative regulator of ABCB1 expression and function through the dephosphorylation of ABCB1 by TFPI2/PPP2R3C complex. May play a role in the activation-induced cell death of B-cells. The polypeptide is Serine/threonine-protein phosphatase 2A regulatory subunit B'' subunit gamma (PPP2R3C) (Homo sapiens (Human)).